Consider the following 555-residue polypeptide: CTP synthase (555 aa).

An amidoligase domain region spans residues 1–277 (MPKEPETEYD…DQHVMERLNV (277 aa)). Ser26 contributes to the CTP binding site. Ser26 serves as a coordination point for UTP. 27-32 (GLGKGI) contributes to the ATP binding site. Tyr67 provides a ligand contact to L-glutamine. Asp84 contacts ATP. Mg(2+) contacts are provided by Asp84 and Glu152. CTP is bound by residues 159–161 (DIE), 198–203 (KTKPTQ), and Lys234. UTP-binding positions include 198-203 (KTKPTQ) and Lys234. The Glutamine amidotransferase type-1 domain maps to 307–542 (LVGKYDLEDA…LKSVDSTLDA (236 aa)). Residue Gly364 coordinates L-glutamine. Residue Cys391 is the Nucleophile; for glutamine hydrolysis of the active site. Residues 392–395 (LGFQ), Glu415, and Arg472 each bind L-glutamine. Active-site residues include His515 and Glu517.

It belongs to the CTP synthase family. Homotetramer.

The catalysed reaction is UTP + L-glutamine + ATP + H2O = CTP + L-glutamate + ADP + phosphate + 2 H(+). The enzyme catalyses L-glutamine + H2O = L-glutamate + NH4(+). It carries out the reaction UTP + NH4(+) + ATP = CTP + ADP + phosphate + 2 H(+). Its pathway is pyrimidine metabolism; CTP biosynthesis via de novo pathway; CTP from UDP: step 2/2. Its activity is regulated as follows. Allosterically activated by GTP, when glutamine is the substrate; GTP has no effect on the reaction when ammonia is the substrate. The allosteric effector GTP functions by stabilizing the protein conformation that binds the tetrahedral intermediate(s) formed during glutamine hydrolysis. Inhibited by the product CTP, via allosteric rather than competitive inhibition. Its function is as follows. Catalyzes the ATP-dependent amination of UTP to CTP with either L-glutamine or ammonia as the source of nitrogen. Regulates intracellular CTP levels through interactions with the four ribonucleotide triphosphates. This is CTP synthase from Haloquadratum walsbyi (strain DSM 16790 / HBSQ001).